The primary structure comprises 693 residues: Golgin subfamily A member 6B (693 aa).

Residues 1–11 are compositionally biased toward pro residues; sequence MWPQPYLPPHP. Disordered regions lie at residues 1–72, 497–551, 629–650, and 660–679; these read MWPQ…SQYQ, LPGE…VERR, NPADEPTPGAPAPQELGAAGEQ, and NNVEPAPGAAREGSPHDNPT. A coiled-coil region spans residues 77 to 611; the sequence is ALESSSVTIS…KLLELQELVL (535 aa). Residues 537 to 551 show a composition bias toward basic and acidic residues; sequence LPKEKADGTEQVERR.

This sequence belongs to the GOLGA6 family.

This is Golgin subfamily A member 6B (GOLGA6B) from Homo sapiens (Human).